A 220-amino-acid polypeptide reads, in one-letter code: Exodeoxyribonuclease 10 (220 aa).

Requires Mg(2+) as cofactor.

Its function is as follows. Capable of degrading both single-strand and double-strand DNA with 3' to 5' polarity. Has higher affinity for ssDNA ends than for dsDNA. In Escherichia coli O6:H1 (strain CFT073 / ATCC 700928 / UPEC), this protein is Exodeoxyribonuclease 10 (exoX).